We begin with the raw amino-acid sequence, 390 residues long: Odorant receptor 85b (390 aa).

Residues 1-30 lie on the Cytoplasmic side of the membrane; the sequence is MEKLMKYASFFYTAVGIRPYTNGEESKMNK. A helical transmembrane segment spans residues 31–51; the sequence is LIFHIVFWSNVINLSFVGLFE. Topologically, residues 52-66 are extracellular; sequence SIYVYSAFMDNKFLE. The chain crosses the membrane as a helical span at residues 67–87; the sequence is AVTALSYIGFVTVGMSKMFFI. Over 88–126 the chain is Cytoplasmic; sequence RWKKTAITELINELKEIYPNGLIREERYNLPMYLGTCSR. Residues 127 to 147 traverse the membrane as a helical segment; that stretch reads ISLIYSLLYSVLIWTFNLFCV. At 148-200 the chain is on the extracellular side; it reads MEYWVYDKWLNIRVVGKQLPYLMYIPWKWQDNWSYYPLLFSQNFAGYTSAAGQ. N179 carries N-linked (GlcNAc...) asparagine glycosylation. A helical transmembrane segment spans residues 201–221; sequence ISTDVLLCAVATQLVMHFDFL. Residues 222 to 260 lie on the Cytoplasmic side of the membrane; it reads SNSMERHELSGDWKKDSRFLVDIVRYHERILRLSDAVND. The chain crosses the membrane as a helical span at residues 261-281; sequence IFGIPLLLNFMVSSFVICFVG. At 282–291 the chain is on the extracellular side; sequence FQMTVGVPPD. Residues 292–312 traverse the membrane as a helical segment; the sequence is IVVKLFLFLVSSMSQVYLICH. Over 313–360 the chain is Cytoplasmic; that stretch reads YGQLVADASYGFSVATYNQKWYKADVRYKRALVIIIARSQKVTFLKAT. A helical transmembrane segment spans residues 361-381; sequence IFLDITRSTMTDLLQISYKFF. At 382-390 the chain is on the extracellular side; it reads ALLRTMYTQ.

This sequence belongs to the insect chemoreceptor superfamily. Heteromeric odorant receptor channel (TC 1.A.69) family. Or49a subfamily. As to quaternary structure, interacts with Orco. Complexes exist early in the endomembrane system in olfactory sensory neurons (OSNs), coupling these complexes to the conserved ciliary trafficking pathway. Expressed in olfactory sensory neurons in the antenna.

Its subcellular location is the cell membrane. In terms of biological role, odorant receptor which mediates acceptance or avoidance behavior, depending on its substrates. The odorant receptor repertoire encodes a large collection of odor stimuli that vary widely in identity, intensity, and duration. Forms a complex with Orco to form odorant-sensing units, providing sensitive and prolonged odorant signaling and calcium permeability. Involved in the behavioral responses to 2-heptanone, amyl acetate, and butyl acetate. This is Odorant receptor 85b (Or85b) from Drosophila melanogaster (Fruit fly).